Reading from the N-terminus, the 359-residue chain is 4-galactosyl-N-acetylglucosaminide 3-alpha-L-fucosyltransferase 9 (359 aa).

Residues 1-11 (MTSTSKGILRP) are Cytoplasmic-facing. A helical; Signal-anchor for type II membrane protein membrane pass occupies residues 12–32 (FLIVCIILGCFMACLLIYIKP). Topologically, residues 33 to 359 (TNSWIFSPME…VGNLEKWFWN (327 aa)) are lumenal. N-linked (GlcNAc...) asparagine glycosylation occurs at asparagine 62. The tract at residues 63 to 168 (ETTILVWVWP…RRDSDIQVPY (106 aa)) is acceptor-binding. Residue glutamine 75 participates in a beta-D-galactosyl-(1-&gt;4)-N-acetyl-beta-D-glucosaminyl derivative binding. 3 disulfide bridges follow: cysteine 82-cysteine 335, cysteine 91-cysteine 338, and cysteine 190-cysteine 238. Asparagine 101 is a glycosylation site (N-linked (GlcNAc...) asparagine). Glutamate 137 serves as a coordination point for a beta-D-galactosyl-(1-&gt;4)-N-acetyl-beta-D-glucosaminyl derivative. The active-site Nucleophile is glutamate 137. Glutamate 137 provides a ligand contact to GDP-beta-L-fucose. Asparagine 153 carries an N-linked (GlcNAc...) asparagine glycan. Tyrosine 168, valine 192, serine 194, asparagine 195, arginine 202, valine 226, tyrosine 241, asparagine 246, tyrosine 252, glutamate 255, and lysine 256 together coordinate GDP-beta-L-fucose. The segment at 169 to 326 (GFLTVSTNPF…NWRKDFTVNL (158 aa)) is donor-binding. The acceptor-binding stretch occupies residues 327-359 (PRFWESHACLACDHVKRHQEYKSVGNLEKWFWN).

It belongs to the glycosyltransferase 10 family. In terms of assembly, homodimer. N-glycosylated with complex-type N-glycans. The glycan alpha-D-Man-(1-&gt;3)-beta-D-Man-(1-&gt;4)-GlcNAc-(1-&gt;4)-GlcNAc is attached at Asn-153. Strongly expressed in forebrain and stomach, lower expression in spleen and peripheral blood leukocytes, and no expression in small intestine, colon, liver, lung, kidney, adrenal cortex or uterus. Highly expressed in granulocytes. Not expressed in monocytes.

Its subcellular location is the golgi apparatus. The protein resides in the trans-Golgi network membrane. It is found in the golgi apparatus membrane. It carries out the reaction a beta-D-galactosyl-(1-&gt;4)-N-acetyl-beta-D-glucosaminyl derivative + GDP-beta-L-fucose = a beta-D-galactosyl-(1-&gt;4)-[alpha-L-fucosyl-(1-&gt;3)]-N-acetyl-beta-D-glucosaminyl derivative + GDP + H(+). The enzyme catalyses an alpha-Neu5Ac-(2-&gt;3)-beta-D-Gal-(1-&gt;4)-beta-D-GlcNAc-(1-&gt;3)-beta-D-Gal-(1-&gt;4)-beta-D-GlcNAc derivative + GDP-beta-L-fucose = an alpha-Neu5Ac-(2-&gt;3)-beta-D-Gal-(1-&gt;4)-beta-D-GlcNAc-(1-&gt;3)-beta-D-Gal-(1-&gt;4)-[alpha-L-Fuc-(1-&gt;3)]-beta-D-GlcNAc derivative + GDP + H(+). It catalyses the reaction alpha-N-glycoloylneuraminosyl-(2-&gt;3)-beta-D-galactosyl-(1-&gt;4)-N-acetyl-beta-D-glucosaminyl-(1-&gt;3)-beta-D-galactosyl-(1-&gt;4)-N-acetyl-beta-D-glucosaminyl-(1-&gt;3)-beta-D-galactosyl-(1-&gt;4)-beta-D-glucosyl-(1&lt;-&gt;1')-ceramide + GDP-beta-L-fucose = alpha-N-glycoloylneuraminosyl-(2-&gt;3)-beta-D-galactosyl-(1-&gt;4)-N-acetyl-beta-D-glucosaminyl-(1-&gt;3)-beta-D-galactosyl-(1-&gt;4)-[alpha-L-fucosyl-(1-&gt;3)]-N-acetyl-beta-D-glucosaminyl-(1-&gt;3)-beta-D-galactosyl-(1-&gt;4)-beta-D-glucosyl-(1&lt;-&gt;1')-ceramide + GDP + H(+). The catalysed reaction is alpha-D-galactosyl-(1-&gt;3)-beta-D-galactosyl-(1-&gt;4)-N-acetyl-beta-D-glucosaminyl-(1-&gt;3)-beta-D-galactosyl-(1-&gt;4)-beta-D-glucosyl-(1&lt;-&gt;1')-ceramide + GDP-beta-L-fucose = a neolactoside IV(3)-alpha-Gal,III(3)-alpha-Fuc-nLc4Cer + GDP + H(+). It carries out the reaction a neolactoside nLc4Cer + GDP-beta-L-fucose = a neolactoside III(3)-alpha-Fuc-nLc4Cer + GDP + H(+). The enzyme catalyses an N-acetyl-alpha-neuraminyl-(2-&gt;3)-beta-D-galactosyl-(1-&gt;4)-N-acetyl-beta-D-glucosaminyl derivative + GDP-beta-L-fucose = an alpha-Neu5Ac-(2-&gt;3)-beta-D-Gal-(1-&gt;4)-[alpha-L-Fuc-(1-&gt;3)]-beta-D-GlcNAc derivative + GDP + H(+). It catalyses the reaction beta-D-Gal-(1-&gt;4)-beta-D-GlcNAc-(1-&gt;3)-beta-D-Gal-(1-&gt;4)-D-Glc + GDP-beta-L-fucose = beta-D-Gal-(1-&gt;4)-[alpha-L-Fuc-(1-&gt;3)]-beta-D-GlcNAc-(1-&gt;3)-beta-D-Gal-(1-&gt;4)-D-Glc + GDP + H(+). The catalysed reaction is an alpha-L-Fuc-(1-&gt;2)-beta-D-Gal-(1-&gt;4)-beta-D-GlcNAc derivative + GDP-beta-L-fucose = an alpha-L-Fuc-(1-&gt;2)-beta-D-Gal-(1-&gt;4)-[alpha-L-Fuc-(1-&gt;3)]-beta-D-GlcNAc derivative + GDP + H(+). It functions in the pathway protein modification; protein glycosylation. Its pathway is glycolipid biosynthesis. Activated by Mn2+. In terms of biological role, catalyzes alpha(1-&gt;3) linkage of fucosyl moiety transferred from GDP-beta-L-fucose to N-acetyl glucosamine (GlcNAc) within type 2 lactosamine (LacNAc, beta-D-Gal-(1-&gt;4)-beta-D-GlcNAc-) glycan attached to glycolipids and N- or O-linked glycoproteins. Fucosylates distal type 2 LacNAc and its fucosylated (H-type 2 LacNAc) and sialylated (sialyl-type 2 LacNAc) derivatives to form Lewis x (Lex) (CD15) and Lewis y (Ley) antigenic epitopes involved in cell adhesion and differentiation. Generates Lex epitopes in the brain, presumably playing a role in the maintenance of neuronal stemness and neurite outgrowth in progenitor neural cells. Fucosylates the internal type 2 LacNAc unit of the polylactosamine chain to form VIM-2 antigen that serves as recognition epitope for SELE. Can also modify milk oligosaccharides, in particular type 2 tetrasaccharide LNnT. The chain is 4-galactosyl-N-acetylglucosaminide 3-alpha-L-fucosyltransferase 9 from Homo sapiens (Human).